Here is a 154-residue protein sequence, read N- to C-terminus: Ribosomal RNA large subunit methyltransferase H (154 aa).

Positions 71 and 103 each coordinate S-adenosyl-L-methionine.

Belongs to the RNA methyltransferase RlmH family. As to quaternary structure, homodimer.

Its subcellular location is the cytoplasm. The enzyme catalyses pseudouridine(1915) in 23S rRNA + S-adenosyl-L-methionine = N(3)-methylpseudouridine(1915) in 23S rRNA + S-adenosyl-L-homocysteine + H(+). Functionally, specifically methylates the pseudouridine at position 1915 (m3Psi1915) in 23S rRNA. This Solidesulfovibrio magneticus (strain ATCC 700980 / DSM 13731 / RS-1) (Desulfovibrio magneticus) protein is Ribosomal RNA large subunit methyltransferase H.